Reading from the N-terminus, the 449-residue chain is Cytochrome P450 2E1 (449 aa).

254-259 lines the substrate pocket; it reads FAGTET. Residue cysteine 393 participates in heme binding.

This sequence belongs to the cytochrome P450 family. As to quaternary structure, interacts with chaperones HSP70 and HSP90; this interaction is required for initial targeting to mitochondria. Requires heme as cofactor.

It localises to the endoplasmic reticulum membrane. Its subcellular location is the microsome membrane. The protein localises to the mitochondrion inner membrane. The enzyme catalyses an organic molecule + reduced [NADPH--hemoprotein reductase] + O2 = an alcohol + oxidized [NADPH--hemoprotein reductase] + H2O + H(+). It catalyses the reaction (5Z,8Z,11Z)-eicosatrienoate + reduced [NADPH--hemoprotein reductase] + O2 = 19-hydroxy-(5Z,8Z,11Z)-eicosatrienoate + oxidized [NADPH--hemoprotein reductase] + H2O + H(+). The catalysed reaction is (5Z,8Z,11Z,14Z,17Z)-eicosapentaenoate + reduced [NADPH--hemoprotein reductase] + O2 = 19-hydroxy-(5Z,8Z,11Z,14Z,17Z)-eicosapentaenoate + oxidized [NADPH--hemoprotein reductase] + H2O + H(+). It carries out the reaction (4Z,7Z,10Z,13Z,16Z,19Z)-docosahexaenoate + reduced [NADPH--hemoprotein reductase] + O2 = 21-hydroxy-(4Z,7Z,10Z,13Z,16Z,19Z)-docosahexaenoate + oxidized [NADPH--hemoprotein reductase] + H2O + H(+). The enzyme catalyses dodecanoate + reduced [NADPH--hemoprotein reductase] + O2 = 11-hydroxydodecanoate + oxidized [NADPH--hemoprotein reductase] + H2O + H(+). It catalyses the reaction tetradecanoate + reduced [NADPH--hemoprotein reductase] + O2 = 13-hydroxytetradecanoate + oxidized [NADPH--hemoprotein reductase] + H2O + H(+). The catalysed reaction is 4-nitrophenol + NADPH + O2 + H(+) = 4-nitrocatechol + NADP(+) + H2O. The protein operates within lipid metabolism; fatty acid metabolism. Its activity is regulated as follows. The omega-1 hydroxylase activity is stimulated by cytochrome b5. Its function is as follows. A cytochrome P450 monooxygenase involved in the metabolism of fatty acids. Mechanistically, uses molecular oxygen inserting one oxygen atom into a substrate, and reducing the second into a water molecule, with two electrons provided by NADPH via cytochrome P450 reductase (NADPH--hemoprotein reductase). Catalyzes the hydroxylation of carbon-hydrogen bonds. Hydroxylates fatty acids specifically at the omega-1 position displaying the highest catalytic activity for saturated fatty acids. May be involved in the oxidative metabolism of xenobiotics. This is Cytochrome P450 2E1 (CYP2E1) from Macaca fascicularis (Crab-eating macaque).